We begin with the raw amino-acid sequence, 161 residues long: Leucine-rich colipase-like protein 1 (161 aa).

The first 25 residues, 1–25 (MSVSVWPPLLLLLLLLLLWAVPTFQ), serve as a signal peptide directing secretion.

This Mus musculus (Mouse) protein is Leucine-rich colipase-like protein 1 (Lrcol1).